The sequence spans 413 residues: Arginine biosynthesis bifunctional protein ArgJ (413 aa).

The substrate site is built by T158, K184, T195, E285, N408, and S413. T195 acts as the Nucleophile in catalysis.

This sequence belongs to the ArgJ family. In terms of assembly, heterotetramer of two alpha and two beta chains.

It is found in the cytoplasm. The enzyme catalyses N(2)-acetyl-L-ornithine + L-glutamate = N-acetyl-L-glutamate + L-ornithine. It carries out the reaction L-glutamate + acetyl-CoA = N-acetyl-L-glutamate + CoA + H(+). The protein operates within amino-acid biosynthesis; L-arginine biosynthesis; L-ornithine and N-acetyl-L-glutamate from L-glutamate and N(2)-acetyl-L-ornithine (cyclic): step 1/1. It functions in the pathway amino-acid biosynthesis; L-arginine biosynthesis; N(2)-acetyl-L-ornithine from L-glutamate: step 1/4. Catalyzes two activities which are involved in the cyclic version of arginine biosynthesis: the synthesis of N-acetylglutamate from glutamate and acetyl-CoA as the acetyl donor, and of ornithine by transacetylation between N(2)-acetylornithine and glutamate. The chain is Arginine biosynthesis bifunctional protein ArgJ from Brucella suis biovar 1 (strain 1330).